Here is a 482-residue protein sequence, read N- to C-terminus: ATP synthase subunit beta (482 aa).

Residue 168–175 (GGAGVGKT) coordinates ATP.

This sequence belongs to the ATPase alpha/beta chains family. F-type ATPases have 2 components, CF(1) - the catalytic core - and CF(0) - the membrane proton channel. CF(1) has five subunits: alpha(3), beta(3), gamma(1), delta(1), epsilon(1). CF(0) has three main subunits: a(1), b(2) and c(9-12). The alpha and beta chains form an alternating ring which encloses part of the gamma chain. CF(1) is attached to CF(0) by a central stalk formed by the gamma and epsilon chains, while a peripheral stalk is formed by the delta and b chains.

It localises to the cell membrane. It carries out the reaction ATP + H2O + 4 H(+)(in) = ADP + phosphate + 5 H(+)(out). Its function is as follows. Produces ATP from ADP in the presence of a proton gradient across the membrane. The catalytic sites are hosted primarily by the beta subunits. This Nocardia farcinica (strain IFM 10152) protein is ATP synthase subunit beta.